We begin with the raw amino-acid sequence, 341 residues long: tRNA N6-adenosine threonylcarbamoyltransferase (341 aa).

The Fe cation site is built by His-113 and His-117. Residues 141–145, Asp-174, Gly-187, and Asn-282 each bind substrate; that span reads LVSGG. Asp-310 contacts Fe cation.

The protein belongs to the KAE1 / TsaD family. It depends on Fe(2+) as a cofactor.

It localises to the cytoplasm. The enzyme catalyses L-threonylcarbamoyladenylate + adenosine(37) in tRNA = N(6)-L-threonylcarbamoyladenosine(37) in tRNA + AMP + H(+). In terms of biological role, required for the formation of a threonylcarbamoyl group on adenosine at position 37 (t(6)A37) in tRNAs that read codons beginning with adenine. Is involved in the transfer of the threonylcarbamoyl moiety of threonylcarbamoyl-AMP (TC-AMP) to the N6 group of A37, together with TsaE and TsaB. TsaD likely plays a direct catalytic role in this reaction. This Porphyromonas gingivalis (strain ATCC BAA-308 / W83) protein is tRNA N6-adenosine threonylcarbamoyltransferase.